Here is a 185-residue protein sequence, read N- to C-terminus: Large ribosomal subunit protein bL25 (185 aa).

This sequence belongs to the bacterial ribosomal protein bL25 family. CTC subfamily. Part of the 50S ribosomal subunit; part of the 5S rRNA/L5/L18/L25 subcomplex. Contacts the 5S rRNA. Binds to the 5S rRNA independently of L5 and L18.

In terms of biological role, this is one of the proteins that binds to the 5S RNA in the ribosome where it forms part of the central protuberance. This Chlamydia trachomatis serovar D (strain ATCC VR-885 / DSM 19411 / UW-3/Cx) protein is Large ribosomal subunit protein bL25.